A 206-amino-acid polypeptide reads, in one-letter code: FMN-dependent NADH:quinone oxidoreductase 4 (206 aa).

FMN is bound by residues S10 and 136–139 (SSGG).

It belongs to the azoreductase type 1 family. As to quaternary structure, homodimer. The cofactor is FMN.

The catalysed reaction is 2 a quinone + NADH + H(+) = 2 a 1,4-benzosemiquinone + NAD(+). It catalyses the reaction N,N-dimethyl-1,4-phenylenediamine + anthranilate + 2 NAD(+) = 2-(4-dimethylaminophenyl)diazenylbenzoate + 2 NADH + 2 H(+). Its function is as follows. Quinone reductase that provides resistance to thiol-specific stress caused by electrophilic quinones. Also exhibits azoreductase activity. Catalyzes the reductive cleavage of the azo bond in aromatic azo compounds to the corresponding amines. The polypeptide is FMN-dependent NADH:quinone oxidoreductase 4 (Pseudomonas fluorescens (strain ATCC BAA-477 / NRRL B-23932 / Pf-5)).